The following is a 250-amino-acid chain: 2,3-bisphosphoglycerate-dependent phosphoglycerate mutase (250 aa).

Residues 8–15 (RHGQSAWN), 21–22 (TG), Arg60, 87–90 (ERHY), Lys98, 114–115 (RR), and 183–184 (GN) contribute to the substrate site. The active-site Tele-phosphohistidine intermediate is the His9. Glu87 acts as the Proton donor/acceptor in catalysis.

Belongs to the phosphoglycerate mutase family. BPG-dependent PGAM subfamily. In terms of assembly, homodimer.

The enzyme catalyses (2R)-2-phosphoglycerate = (2R)-3-phosphoglycerate. The protein operates within carbohydrate degradation; glycolysis; pyruvate from D-glyceraldehyde 3-phosphate: step 3/5. In terms of biological role, catalyzes the interconversion of 2-phosphoglycerate and 3-phosphoglycerate. This Nitratidesulfovibrio vulgaris (strain DP4) (Desulfovibrio vulgaris) protein is 2,3-bisphosphoglycerate-dependent phosphoglycerate mutase.